The following is a 120-amino-acid chain: Holo-[acyl-carrier-protein] synthase (120 aa).

Mg(2+) contacts are provided by Asp-8 and Glu-60.

This sequence belongs to the P-Pant transferase superfamily. AcpS family. Requires Mg(2+) as cofactor.

The protein localises to the cytoplasm. It catalyses the reaction apo-[ACP] + CoA = holo-[ACP] + adenosine 3',5'-bisphosphate + H(+). Functionally, transfers the 4'-phosphopantetheine moiety from coenzyme A to a Ser of acyl-carrier-protein. The polypeptide is Holo-[acyl-carrier-protein] synthase (Anaplasma marginale (strain St. Maries)).